The chain runs to 490 residues: MRDLFAPWGLDVPERALREMTLDSRIAAAGDLFVAVVGHQTDGRRYIPQAIAQGVAAIVAEADGVAPDVSVAEIHGVPVIYLRNLNQHLSTLAGQFYHQPGAALRLVGVTGTNGKTTTTQLLAQWSQALGETSAVMGTVGNGLLGQVIPTENTTGSAVDIQHLLRNLVDQGATFAAMEVSSHGLIQDRVAALSFAAVVFTNLSRDHLDYHGNMTSYEAAKWLLFSTHQSEHKIINADDDVGRRWLSQLPQAVAVSMAGNVPKGWNGPWLSANKVIYHDNGASIAFDSSWGEGELESRLMGAFNVSNLLVALATLLVQGYPMAQLLAAAPHLQPVCGRMEVFNAPGKPTVVVDYAHTPDALEKALAAARLHCTGKLWCVFGCGGDRDKGKRPLMGGIAEQLADCVVVTDDNPRSEEPQAIVADILSGLLDAGRVQAIHGRAEAVTSAIMQAKEDDVVLIAGKGHEDYQLVGNRRLDYSDRVTVARLLGGQA.

UDP-N-acetyl-alpha-D-muramoyl-L-alanyl-D-glutamate-binding positions include leucine 22, serine 24, and 39 to 41 (HQT). 111–117 (GTNGKTT) provides a ligand contact to ATP. UDP-N-acetyl-alpha-D-muramoyl-L-alanyl-D-glutamate is bound by residues asparagine 152, 153-154 (TT), serine 180, glutamine 186, and arginine 188. Lysine 220 carries the post-translational modification N6-carboxylysine. Residues arginine 385, 409–412 (DNPR), glycine 460, and glutamate 464 contribute to the meso-2,6-diaminopimelate site. The Meso-diaminopimelate recognition motif signature appears at 409 to 412 (DNPR).

This sequence belongs to the MurCDEF family. MurE subfamily. Mg(2+) serves as cofactor. Carboxylation is probably crucial for Mg(2+) binding and, consequently, for the gamma-phosphate positioning of ATP.

The protein localises to the cytoplasm. It carries out the reaction UDP-N-acetyl-alpha-D-muramoyl-L-alanyl-D-glutamate + meso-2,6-diaminopimelate + ATP = UDP-N-acetyl-alpha-D-muramoyl-L-alanyl-gamma-D-glutamyl-meso-2,6-diaminopimelate + ADP + phosphate + H(+). It functions in the pathway cell wall biogenesis; peptidoglycan biosynthesis. Functionally, catalyzes the addition of meso-diaminopimelic acid to the nucleotide precursor UDP-N-acetylmuramoyl-L-alanyl-D-glutamate (UMAG) in the biosynthesis of bacterial cell-wall peptidoglycan. In Yersinia pestis, this protein is UDP-N-acetylmuramoyl-L-alanyl-D-glutamate--2,6-diaminopimelate ligase.